We begin with the raw amino-acid sequence, 624 residues long: tRNA uridine 5-carboxymethylaminomethyl modification enzyme MnmG (624 aa).

Residue 14 to 19 (GAGHAG) participates in FAD binding. Residue 273-287 (GTRYCPSFEDKVVRF) coordinates NAD(+).

This sequence belongs to the MnmG family. Homodimer. Heterotetramer of two MnmE and two MnmG subunits. The cofactor is FAD.

The protein resides in the cytoplasm. Functionally, NAD-binding protein involved in the addition of a carboxymethylaminomethyl (cmnm) group at the wobble position (U34) of certain tRNAs, forming tRNA-cmnm(5)s(2)U34. The sequence is that of tRNA uridine 5-carboxymethylaminomethyl modification enzyme MnmG from Syntrophomonas wolfei subsp. wolfei (strain DSM 2245B / Goettingen).